The following is a 140-amino-acid chain: Transcription antitermination protein NusB (140 aa).

This sequence belongs to the NusB family.

Functionally, involved in transcription antitermination. Required for transcription of ribosomal RNA (rRNA) genes. Binds specifically to the boxA antiterminator sequence of the ribosomal RNA (rrn) operons. This Alteromonas mediterranea (strain DSM 17117 / CIP 110805 / LMG 28347 / Deep ecotype) protein is Transcription antitermination protein NusB.